Here is a 555-residue protein sequence, read N- to C-terminus: Beta-hexosaminidase A (555 aa).

The N-terminal stretch at Met-1–Thr-18 is a signal peptide. Residue Asn-47 is glycosylated (N-linked (GlcNAc...) asparagine). Glu-325 acts as the Proton donor in catalysis. N-linked (GlcNAc...) asparagine glycans are attached at residues Asn-351, Asn-412, and Asn-460.

Belongs to the glycosyl hydrolase 20 family. As to expression, expressed in coelomocytes and neurons of the pharyngeal region and nerve cord.

The protein resides in the lysosome. It carries out the reaction Hydrolysis of terminal non-reducing N-acetyl-D-hexosamine residues in N-acetyl-beta-D-hexosaminides.. Responsible for the degradation of GM2 gangliosides, and a variety of other molecules containing terminal N-acetyl hexosamines. Degrades chitotriose. The protein is Beta-hexosaminidase A (hex-1) of Caenorhabditis elegans.